Reading from the N-terminus, the 137-residue chain is Large ribosomal subunit protein uL16 (137 aa).

It belongs to the universal ribosomal protein uL16 family. In terms of assembly, part of the 50S ribosomal subunit.

Binds 23S rRNA and is also seen to make contacts with the A and possibly P site tRNAs. The sequence is that of Large ribosomal subunit protein uL16 from Azotobacter vinelandii (strain DJ / ATCC BAA-1303).